The following is a 237-amino-acid chain: 1-(5-phosphoribosyl)-5-[(5-phosphoribosylamino)methylideneamino] imidazole-4-carboxamide isomerase (237 aa).

Asp-8 (proton acceptor) is an active-site residue. Catalysis depends on Asp-129, which acts as the Proton donor.

This sequence belongs to the HisA/HisF family.

It is found in the cytoplasm. It catalyses the reaction 1-(5-phospho-beta-D-ribosyl)-5-[(5-phospho-beta-D-ribosylamino)methylideneamino]imidazole-4-carboxamide = 5-[(5-phospho-1-deoxy-D-ribulos-1-ylimino)methylamino]-1-(5-phospho-beta-D-ribosyl)imidazole-4-carboxamide. It participates in amino-acid biosynthesis; L-histidine biosynthesis; L-histidine from 5-phospho-alpha-D-ribose 1-diphosphate: step 4/9. The sequence is that of 1-(5-phosphoribosyl)-5-[(5-phosphoribosylamino)methylideneamino] imidazole-4-carboxamide isomerase from Dehalococcoides mccartyi (strain ATCC BAA-2266 / KCTC 15142 / 195) (Dehalococcoides ethenogenes (strain 195)).